The following is a 351-amino-acid chain: Protein disulfide isomerase CRELD2 (351 aa).

The signal sequence occupies residues 1–21 (MRPPAPAVLGLLLLLLPTGEA). The CXXC motif lies at 28–31 (CKRC). 4 cysteine pairs are disulfide-bonded: Cys-28/Cys-31, Cys-137/Cys-151, Cys-145/Cys-163, and Cys-165/Cys-174. Residues 133–175 (DCLACQGGSERPCSGNGHCVGDGTREGDGSCQCHLGYQGPLCS) enclose the EGF-like 1 domain. The FU 1 repeat unit spans residues 190-237 (HSICSACDEACKTCVGPTNRDCGQCEVGWVRQDDACVDVDECAAEPPP). Asn-248 is a glycosylation site (N-linked (GlcNAc...) asparagine). The stretch at 250–297 (SFVCEECDPTCMGCTGKGPTQCRECIAGYSKESGQCEDIDECSLAEKP) is one FU 2 repeat. Residues 260–263 (CMGC) carry the CXXC motif. 4 disulfide bridges follow: Cys-260-Cys-263, Cys-291-Cys-305, Cys-298-Cys-314, and Cys-316-Cys-327. The region spanning 287–328 (DIDECSLAEKPCLRDNENCYNTPGSFVCVCPDGFEEAEDTCV) is the EGF-like 2; calcium-binding domain. Positions 329–351 (QTRPAGAEATEASPTQPPSREDL) are disordered.

The protein belongs to the CRELD family. In terms of assembly, interacts with CHRNA4. Component of a complex containing at least CRELD2, MANF, MATN3 and PDIA4.

The protein resides in the endoplasmic reticulum. It carries out the reaction Catalyzes the rearrangement of -S-S- bonds in proteins.. Its function is as follows. Protein disulfide isomerase. Might play a role in the unfolded protein response. May regulate transport of alpha4-beta2 neuronal acetylcholine receptor. In Bos taurus (Bovine), this protein is Protein disulfide isomerase CRELD2 (CRELD2).